The primary structure comprises 263 residues: Elongin-A (263 aa).

Disordered regions lie at residues Lys-112–Lys-147 and Ser-170–Ile-263. 2 stretches are compositionally biased toward polar residues: residues Arg-186 to Pro-206 and Ser-214 to Gln-229. Low complexity predominate over residues Pro-230–Pro-245. Residues Ser-253–Ile-263 show a composition bias toward polar residues.

This sequence belongs to the ELA1 family. In terms of assembly, heterodimer with elc1. Component of a CRL3 E3 ubiquitin ligase complex consisting of a cullin, the linker protein elc1, the substrate receptor pof4/ela1, and the RING protein rbx1. Interacts with skp1.

Functionally, as part of the CRL3 E3 ubiquitin ligase complex; polyubiquitylates monoubiquitylated RNA polymerase II subunit rpb1 to trigger its proteolysis; plays a role in global genomic repair. The protein is Elongin-A (pof4) of Schizosaccharomyces pombe (strain 972 / ATCC 24843) (Fission yeast).